The chain runs to 172 residues: Small ribosomal subunit protein uS5 (172 aa).

One can recognise an S5 DRBM domain in the interval 17–80; sequence LREKMISVNR…EQARRNMFKV (64 aa).

Belongs to the universal ribosomal protein uS5 family. Part of the 30S ribosomal subunit. Contacts proteins S4 and S8.

With S4 and S12 plays an important role in translational accuracy. In terms of biological role, located at the back of the 30S subunit body where it stabilizes the conformation of the head with respect to the body. This Burkholderia thailandensis (strain ATCC 700388 / DSM 13276 / CCUG 48851 / CIP 106301 / E264) protein is Small ribosomal subunit protein uS5.